Here is an 81-residue protein sequence, read N- to C-terminus: Large ribosomal subunit protein bL27 (81 aa).

A compositionally biased stretch (polar residues) spans 1-11; it reads MATSKSGGSSK. The disordered stretch occupies residues 1 to 21; the sequence is MATSKSGGSSKNGRDSISKRL.

The protein belongs to the bacterial ribosomal protein bL27 family.

The polypeptide is Large ribosomal subunit protein bL27 (Borrelia hermsii (strain HS1 / DAH)).